The chain runs to 273 residues: Phosphate import ATP-binding protein PstB (273 aa).

Residues 19-258 (LSLQNVTISY…FNDTDKIFNA (240 aa)) enclose the ABC transporter domain. 51 to 58 (GPSGCGKS) serves as a coordination point for ATP.

Belongs to the ABC transporter superfamily. Phosphate importer (TC 3.A.1.7) family. As to quaternary structure, the complex is composed of two ATP-binding proteins (PstB), two transmembrane proteins (PstC and PstA) and a solute-binding protein (PstS).

It localises to the cell inner membrane. The catalysed reaction is phosphate(out) + ATP + H2O = ADP + 2 phosphate(in) + H(+). In terms of biological role, part of the ABC transporter complex PstSACB involved in phosphate import. Responsible for energy coupling to the transport system. The sequence is that of Phosphate import ATP-binding protein PstB from Synechococcus sp. (strain CC9605).